A 372-amino-acid polypeptide reads, in one-letter code: Chaperone protein DnaJ (372 aa).

Residues 5–69 (DYYEVLGVDR…QKKARYDQFG (65 aa)) enclose the J domain. The CR-type zinc-finger motif lies at 129-211 (GKETEIEIPR…CSGKGKVRKR (83 aa)). 8 residues coordinate Zn(2+): Cys142, Cys145, Cys159, Cys162, Cys185, Cys188, Cys199, and Cys202. CXXCXGXG motif repeat units follow at residues 142-149 (CGTCHGSG), 159-166 (CSHCGGSG), 185-192 (CNYCEGTG), and 199-206 (CATCSGKG).

The protein belongs to the DnaJ family. As to quaternary structure, homodimer. Zn(2+) is required as a cofactor.

It localises to the cytoplasm. Functionally, participates actively in the response to hyperosmotic and heat shock by preventing the aggregation of stress-denatured proteins and by disaggregating proteins, also in an autonomous, DnaK-independent fashion. Unfolded proteins bind initially to DnaJ; upon interaction with the DnaJ-bound protein, DnaK hydrolyzes its bound ATP, resulting in the formation of a stable complex. GrpE releases ADP from DnaK; ATP binding to DnaK triggers the release of the substrate protein, thus completing the reaction cycle. Several rounds of ATP-dependent interactions between DnaJ, DnaK and GrpE are required for fully efficient folding. Also involved, together with DnaK and GrpE, in the DNA replication of plasmids through activation of initiation proteins. The polypeptide is Chaperone protein DnaJ (Shouchella clausii (strain KSM-K16) (Alkalihalobacillus clausii)).